Here is a 115-residue protein sequence, read N- to C-terminus: NADH-ubiquinone oxidoreductase chain 3 (115 aa).

The next 3 helical transmembrane spans lie at 3-23, 55-75, and 84-104; these read LMLA…IAFW, FFLV…LLPL, and LNTM…SLAY.

The protein belongs to the complex I subunit 3 family. In terms of assembly, core subunit of respiratory chain NADH dehydrogenase (Complex I) which is composed of 45 different subunits. Interacts with TMEM186. Interacts with TMEM242.

The protein localises to the mitochondrion inner membrane. It carries out the reaction a ubiquinone + NADH + 5 H(+)(in) = a ubiquinol + NAD(+) + 4 H(+)(out). In terms of biological role, core subunit of the mitochondrial membrane respiratory chain NADH dehydrogenase (Complex I) which catalyzes electron transfer from NADH through the respiratory chain, using ubiquinone as an electron acceptor. Essential for the catalytic activity of complex I. This chain is NADH-ubiquinone oxidoreductase chain 3, found in Bos indicus (Zebu).